A 152-amino-acid polypeptide reads, in one-letter code: Putative RING finger protein 157L (152 aa).

An RING-type zinc finger spans residues 111-146 (CVVCYENEICIKIQPCNHFVVCKSCFNRLNTCPMCR).

It belongs to the IIV-6 157L family.

The chain is Putative RING finger protein 157L from Invertebrate iridescent virus 6 (IIV-6).